The sequence spans 353 residues: GTPase Obg (353 aa).

The 159-residue stretch at 1 to 159 folds into the Obg domain; it reads MKFVDEVRIH…RDLVLELKLL (159 aa). The 174-residue stretch at 160-333 folds into the OBG-type G domain; the sequence is ADVGIVGYPN…LMDAVGRALY (174 aa). GTP-binding positions include 166–173, 191–195, 212–215, 283–286, and 314–316; these read GYPNAGKS, FTTLV, DIPG, TKID, and SAV. The Mg(2+) site is built by Ser173 and Thr193.

Belongs to the TRAFAC class OBG-HflX-like GTPase superfamily. OBG GTPase family. Monomer. It depends on Mg(2+) as a cofactor.

It is found in the cytoplasm. Functionally, an essential GTPase which binds GTP, GDP and possibly (p)ppGpp with moderate affinity, with high nucleotide exchange rates and a fairly low GTP hydrolysis rate. Plays a role in control of the cell cycle, stress response, ribosome biogenesis and in those bacteria that undergo differentiation, in morphogenesis control. The chain is GTPase Obg from Anaeromyxobacter sp. (strain Fw109-5).